The primary structure comprises 669 residues: Protein adenylyltransferase SelO, mitochondrial (669 aa).

Residues Met-1–Glu-115 constitute a mitochondrion transit peptide. Gly-153, Gly-155, Lys-176, Asp-188, Gly-189, Arg-246, and Arg-253 together coordinate ATP. The active-site Proton acceptor is the Asp-338. Residues Asn-339 and Asp-348 each coordinate Mg(2+). Residue Asp-348 coordinates ATP. The interval Ala-634–Ser-654 is disordered. Thr-635 bears the Phosphothreonine mark. A Phosphoserine modification is found at Ser-653. A non-standard amino acid (selenocysteine) is located at residue Sec-667.

This sequence belongs to the SELO family. Mg(2+) serves as cofactor.

Its subcellular location is the mitochondrion. It catalyses the reaction L-tyrosyl-[protein] + ATP = O-(5'-adenylyl)-L-tyrosyl-[protein] + diphosphate. The enzyme catalyses L-threonyl-[protein] + ATP = 3-O-(5'-adenylyl)-L-threonyl-[protein] + diphosphate. The catalysed reaction is L-seryl-[protein] + ATP = 3-O-(5'-adenylyl)-L-seryl-[protein] + diphosphate. Functionally, catalyzes the transfer of adenosine 5'-monophosphate (AMP) to Ser, Thr and Tyr residues of target proteins (AMPylation). May be a redox-active mitochondrial selenoprotein which interacts with a redox target protein. This is Protein adenylyltransferase SelO, mitochondrial from Homo sapiens (Human).